The primary structure comprises 331 residues: Fe-S cluster assembly protein DRE2 (331 aa).

The segment at 1–146 (MSEILLLLHP…MPTFKKPVSS (146 aa)) is N-terminal SAM-like domain. Residues 142 to 164 (KPVSSPVTLTDTSANNTDAEDDL) are disordered. Residues 146–158 (SPVTLTDTSANNT) are compositionally biased toward polar residues. The linker stretch occupies residues 147–202 (PVTLTDTSANNTDAEDDLSMKRKLDSTKLAYFSDDSSGEEDDLIDENELIADSHKF). [2Fe-2S] cluster-binding residues include cysteine 212, cysteine 224, cysteine 227, and cysteine 229. The fe-S binding site A stretch occupies residues 212–229 (CELPNGKKRKKACKDCTC). Positions 294, 297, 305, and 308 each coordinate [4Fe-4S] cluster. 2 short sequence motifs (cx2C motif) span residues 294-297 (CSSC) and 305-308 (CDGC). A fe-S binding site B region spans residues 294–308 (CSSCALGDAFRCDGC).

The protein belongs to the anamorsin family. Monomer. Interacts with TAH18. Interacts with MIA40. Requires [2Fe-2S] cluster as cofactor. [4Fe-4S] cluster serves as cofactor.

The protein resides in the cytoplasm. The protein localises to the mitochondrion intermembrane space. In terms of biological role, component of the cytosolic iron-sulfur (Fe-S) protein assembly (CIA) machinery required for the maturation of extramitochondrial Fe-S proteins. Part of an electron transfer chain functioning in an early step of cytosolic Fe-S biogenesis, facilitating the de novo assembly of a [4Fe-4S] cluster on the scaffold complex CFD1-NBP35. Electrons are transferred to DRE2 from NADPH via the FAD- and FMN-containing protein TAH18. TAH18-DRE2 are also required for the assembly of the diferric tyrosyl radical cofactor of ribonucleotide reductase (RNR), probably by providing electrons for reduction during radical cofactor maturation in the catalytic small subunit RNR2. This chain is Fe-S cluster assembly protein DRE2, found in Clavispora lusitaniae (strain ATCC 42720) (Yeast).